The sequence spans 277 residues: MKHLPQLEGVSVGLEGEAVSLFWGEIKEEERQEIYECAKALVPWRKGPFWVGDFLIDSEWVSAKKYALLEPHFDLCNKDVADIGCNNGYYMFRMWGQKPKSLTGFDPSPLCRTQFDFINHFIQAPIRFELLGVEHLEGYGKLFDVIFCLGVLYHRSDPIQTLKSLYKGLAKGGELLLDTLMIEGEEEVALTPKDRYAKMSNVYFIPTFKALSHWLHRAGFERVEKLEIAKTGLDEQRKTEWINSQSLEDFLDPCSHDRTIEGYPAPRRIYVKAYKGA.

Residues Lys46, Trp60, Lys65, Gly84, Asp106–Ser108, Val133–Glu134, Tyr153, and Arg268 contribute to the carboxy-S-adenosyl-L-methionine site.

It belongs to the class I-like SAM-binding methyltransferase superfamily. CmoB family. As to quaternary structure, homotetramer.

The catalysed reaction is carboxy-S-adenosyl-L-methionine + 5-hydroxyuridine(34) in tRNA = 5-carboxymethoxyuridine(34) in tRNA + S-adenosyl-L-homocysteine + H(+). Its function is as follows. Catalyzes carboxymethyl transfer from carboxy-S-adenosyl-L-methionine (Cx-SAM) to 5-hydroxyuridine (ho5U) to form 5-carboxymethoxyuridine (cmo5U) at position 34 in tRNAs. The protein is tRNA U34 carboxymethyltransferase of Wolinella succinogenes (strain ATCC 29543 / DSM 1740 / CCUG 13145 / JCM 31913 / LMG 7466 / NCTC 11488 / FDC 602W) (Vibrio succinogenes).